We begin with the raw amino-acid sequence, 296 residues long: tRNA dimethylallyltransferase (296 aa).

An ATP-binding site is contributed by 11 to 18; the sequence is GPTAVGKT. Position 13 to 18 (13 to 18) interacts with substrate; the sequence is TAVGKT. The segment at 36-39 is interaction with substrate tRNA; it reads DSQQ.

This sequence belongs to the IPP transferase family. As to quaternary structure, monomer. Requires Mg(2+) as cofactor.

It catalyses the reaction adenosine(37) in tRNA + dimethylallyl diphosphate = N(6)-dimethylallyladenosine(37) in tRNA + diphosphate. In terms of biological role, catalyzes the transfer of a dimethylallyl group onto the adenine at position 37 in tRNAs that read codons beginning with uridine, leading to the formation of N6-(dimethylallyl)adenosine (i(6)A). This chain is tRNA dimethylallyltransferase, found in Streptococcus agalactiae serotype III (strain NEM316).